A 442-amino-acid polypeptide reads, in one-letter code: Prenyltransferase nscD (442 aa).

Belongs to the tryptophan dimethylallyltransferase family.

It functions in the pathway secondary metabolite biosynthesis. Functionally, prenyltransferase; part of the gene cluster that mediates the biosynthesis of neosartoricin B, a prenylated anthracenone that probably exhibits T-cell antiproliferative activity, suggestive of a physiological role as an immunosuppressive agent. The non-reducing polyketide synthase nscA probably synthesizes and cyclizes the decaketide backbone. The hydrolase nscB then mediates the product release through hydrolysis followed by spontaneous decarboxylation. The prenyltransferase nscD catalyzes the addition of the dimethylallyl group to the aromatic C5. The FAD-dependent monooxygenase nscC is then responsible for the stereospecific hydroxylation at C2. Neosartoricin B can be converted into two additional compounds neosartoricins C and D. Neosartoricin C is a spirocyclic compound that is cyclized through the attack of C3 hydroxyl on C14, followed by dehydration. On the other hand, neosartoricin D is a further cyclized compound in which attack of C2 on C14 in neosartoricin C results in the formation of the acetal-containing dioxabicyclo-octanone ring. Both of these compounds are novel and possibly represent related metabolites of the gene cluster. The protein is Prenyltransferase nscD of Trichophyton verrucosum (strain HKI 0517).